The sequence spans 115 residues: MNMLITMTVNSALSFCLISIAFWLPHLNIYTEKASPYECGFDPMSSARLPFSLKFFLVGITFLLFDLEIALLLPLPWAMHSPNTTTTMMVSFMFVSILALGLAYEWLNKGLEWTE.

The next 3 membrane-spanning stretches (helical) occupy residues 4-24, 55-75, and 87-107; these read LITMTVNSALSFCLISIAFWL, FFLVGITFLLFDLEIALLLPL, and TMMVSFMFVSILALGLAYEWL.

It belongs to the complex I subunit 3 family. Core subunit of respiratory chain NADH dehydrogenase (Complex I) which is composed of 45 different subunits. Interacts with TMEM186. Interacts with TMEM242.

The protein resides in the mitochondrion inner membrane. It catalyses the reaction a ubiquinone + NADH + 5 H(+)(in) = a ubiquinol + NAD(+) + 4 H(+)(out). Its function is as follows. Core subunit of the mitochondrial membrane respiratory chain NADH dehydrogenase (Complex I) which catalyzes electron transfer from NADH through the respiratory chain, using ubiquinone as an electron acceptor. Essential for the catalytic activity of complex I. This is NADH-ubiquinone oxidoreductase chain 3 from Notiomys edwardsii (Edwards's long-clawed mouse).